The following is a 184-amino-acid chain: Large ribosomal subunit protein uL22 (184 aa).

Belongs to the universal ribosomal protein uL22 family. Part of the 50S ribosomal subunit.

In terms of biological role, this protein binds specifically to 23S rRNA. It makes multiple contacts with different domains of the 23S rRNA in the assembled 50S subunit and ribosome. Its function is as follows. The globular domain of the protein is located near the polypeptide exit tunnel on the outside of the subunit, while an extended beta-hairpin is found that lines the wall of the exit tunnel in the center of the 70S ribosome. The sequence is that of Large ribosomal subunit protein uL22 from Pyrobaculum calidifontis (strain DSM 21063 / JCM 11548 / VA1).